The chain runs to 105 residues: Thioredoxin-like protein slr0233 (105 aa).

The Thioredoxin domain maps to 1–102; sequence MAVKKQFANF…QAAQLIQQLQ (102 aa). The cysteines at positions 30 and 33 are disulfide-linked.

This sequence belongs to the thioredoxin family.

The chain is Thioredoxin-like protein slr0233 from Synechocystis sp. (strain ATCC 27184 / PCC 6803 / Kazusa).